The primary structure comprises 368 residues: Molybdenum import ATP-binding protein ModC (368 aa).

An ABC transporter domain is found at 1–230 (MTIKIQFKQT…HAMRPWQSFS (230 aa)). 32–39 (GRSGAGKT) contributes to the ATP binding site. Residues 291–362 (ATSIRNVLPA…VKGVSVTQRD (72 aa)) form the Mop domain.

This sequence belongs to the ABC transporter superfamily. Molybdate importer (TC 3.A.1.8) family. In terms of assembly, the complex is composed of two ATP-binding proteins (ModC), two transmembrane proteins (ModB) and a solute-binding protein (ModA).

It is found in the cell inner membrane. The catalysed reaction is molybdate(out) + ATP + H2O = molybdate(in) + ADP + phosphate + H(+). In terms of biological role, part of the ABC transporter complex ModABC involved in molybdenum import. Responsible for energy coupling to the transport system. This chain is Molybdenum import ATP-binding protein ModC, found in Vibrio parahaemolyticus serotype O3:K6 (strain RIMD 2210633).